The following is a 676-amino-acid chain: Heat shock cognate HSP70 protein (676 aa).

The disordered stretch occupies residues 613–676; sequence SARREGKDGW…RIEAINANTE (64 aa). Acidic residues predominate over residues 630 to 646; the sequence is GSGDDNDGDDNSDEEDE.

It belongs to the heat shock protein 70 family.

The sequence is that of Heat shock cognate HSP70 protein from Trypanosoma brucei brucei.